Consider the following 208-residue polypeptide: Protein-L-isoaspartate O-methyltransferase (208 aa).

S59 is a catalytic residue.

The protein belongs to the methyltransferase superfamily. L-isoaspartyl/D-aspartyl protein methyltransferase family.

It localises to the cytoplasm. It carries out the reaction [protein]-L-isoaspartate + S-adenosyl-L-methionine = [protein]-L-isoaspartate alpha-methyl ester + S-adenosyl-L-homocysteine. Catalyzes the methyl esterification of L-isoaspartyl residues in peptides and proteins that result from spontaneous decomposition of normal L-aspartyl and L-asparaginyl residues. It plays a role in the repair and/or degradation of damaged proteins. The sequence is that of Protein-L-isoaspartate O-methyltransferase from Salmonella newport (strain SL254).